The following is a 625-amino-acid chain: MVRAALVTATSLALTGAVVAHAYFLKHQFYPTVVYLTKSSPSMAVLYIQAFVLVFLLGKLMRKVFFGQLRAAEMEHLIERSWYAVTETCLAFTVFRDDFSPRFVALFTLLLFLKCFHWLAEDRVDFMERSPNISWVFHFRVLSLMVLLGVMDFLFVNHACHSIITRGASVQLVFGFEYAILMTMVLTTFIKYTLHTIDLQSENPWDNKAVYMLYTELFTGFIKVLLYMAFMTIMIKVHTFPLFAIRPMYLAMRQFKKAVTDAIMSRRAIRNMNTLYPDATPEDLQATDNVCIICREEMVTGAKKLPCNHIFHSSCLRSWFQRQQTCPTCRMDVLRASQPNQTPAPPAAQAPAPPAPANAPIPPPVNVAPGMIPQFPPGLFPFWGPFPGAPPPAVPGAPAAPTDTPQPSSDGAQGAESGAGGLAQSTAEAASAAPGAMPGFPFTMPPPFPSAPWLPMPPPPPFMSSMPPPPSSLSSMSEAELRELEQEGRRGLEARLQCLHNIHTLLDAAMLNIHHYLSTVATLSPPRSETNTGETSESANVESSPSTANTETAGQEIQSQSGESINGAAGFSQPDSTTEGEKDVKEEDEDDGEPSAAELRRRRLRKLETTNTPDHGNLLKLASVN.

At 1 to 4 the chain is on the cytoplasmic side; it reads MVRA. A helical membrane pass occupies residues 5–25; that stretch reads ALVTATSLALTGAVVAHAYFL. Residues 26-40 lie on the Lumenal side of the membrane; the sequence is KHQFYPTVVYLTKSS. The helical transmembrane segment at 41–61 threads the bilayer; it reads PSMAVLYIQAFVLVFLLGKLM. The Cytoplasmic segment spans residues 62–98; sequence RKVFFGQLRAAEMEHLIERSWYAVTETCLAFTVFRDD. The chain crosses the membrane as a helical span at residues 99 to 119; it reads FSPRFVALFTLLLFLKCFHWL. Residues 120-135 lie on the Lumenal side of the membrane; sequence AEDRVDFMERSPNISW. A helical transmembrane segment spans residues 136-156; the sequence is VFHFRVLSLMVLLGVMDFLFV. Residues 157 to 169 lie on the Cytoplasmic side of the membrane; sequence NHACHSIITRGAS. The chain crosses the membrane as a helical span at residues 170 to 190; that stretch reads VQLVFGFEYAILMTMVLTTFI. Topologically, residues 191–212 are lumenal; sequence KYTLHTIDLQSENPWDNKAVYM. The helical transmembrane segment at 213–235 threads the bilayer; it reads LYTELFTGFIKVLLYMAFMTIMI. The tract at residues 236–270 is interaction with p53/TP53; the sequence is KVHTFPLFAIRPMYLAMRQFKKAVTDAIMSRRAIR. Residues 236 to 625 lie on the Cytoplasmic side of the membrane; sequence KVHTFPLFAI…GNLLKLASVN (390 aa). Positions 291, 294, 307, 309, 312, 315, 326, and 329 each coordinate Zn(2+). An RING-type; atypical zinc finger spans residues 291–330; the sequence is CIICREEMVTGAKKLPCNHIFHSSCLRSWFQRQQTCPTCR. 4 disordered regions span residues 337 to 361, 390 to 434, 462 to 487, and 523 to 625; these read SQPN…NAPI, PPPA…SAAP, FMSS…LEQE, and LSPP…ASVN. The span at 342–361 shows a compositional bias: pro residues; sequence TPAPPAAQAPAPPAPANAPI. The span at 423-434 shows a compositional bias: low complexity; the sequence is AQSTAEAASAAP. Positions 462–471 are enriched in pro residues; sequence FMSSMPPPPS. Residues 523-564 show a composition bias toward polar residues; the sequence is LSPPRSETNTGETSESANVESSPSTANTETAGQEIQSQSGES.

It belongs to the HRD1 family. As to quaternary structure, homodimer.

It is found in the endoplasmic reticulum membrane. The catalysed reaction is S-ubiquitinyl-[E2 ubiquitin-conjugating enzyme]-L-cysteine + [acceptor protein]-L-lysine = [E2 ubiquitin-conjugating enzyme]-L-cysteine + N(6)-ubiquitinyl-[acceptor protein]-L-lysine.. It participates in protein modification; protein ubiquitination. In terms of biological role, E3 ubiquitin-protein ligase which accepts ubiquitin specifically from endoplasmic reticulum-associated UBC7 E2 ligase and transfers it to substrates, promoting their degradation. Component of the endoplasmic reticulum quality control (ERQC) system also called ER-associated degradation (ERAD) involved in ubiquitin-dependent degradation of misfolded endoplasmic reticulum proteins. Also promotes the degradation of normal but naturally short-lived proteins. Protects cells from ER stress-induced apoptosis. Sequesters p53 in the cytoplasm and promotes its degradation, thereby negatively regulating its biological function in transcription, cell cycle regulation and apoptosis. The sequence is that of E3 ubiquitin-protein ligase synoviolin (syvn1) from Danio rerio (Zebrafish).